The chain runs to 251 residues: uncharacterized protein (251 aa).

7 consecutive transmembrane segments (helical) span residues 48-68 (WMVG…VELI), 88-108 (VLWG…LVAN), 110-130 (IPLL…FIWV), 132-152 (AMVW…GSSF), 158-178 (IGVS…GLFV), 184-204 (IIGC…MPVL), and 209-229 (GVSW…AYLL).

This sequence to M.tuberculosis Rv1337.

Its subcellular location is the cell membrane. This is an uncharacterized protein from Mycobacterium leprae (strain TN).